Reading from the N-terminus, the 899-residue chain is Probable dipeptidyl-aminopeptidase B (899 aa).

Disordered stretches follow at residues 1–37 (MARKDKDNGPEFVPLTNRSHRSSASFSSTDSLSSDGS) and 51–84 (KITRTQLPEENPYRDDDVELERGDNIFSRPTENS). Over 1 to 91 (MARKDKDNGP…ENSKRNRGSR (91 aa)) the chain is Cytoplasmic. The segment covering 22-37 (SSASFSSTDSLSSDGS) has biased composition (low complexity). Over residues 61–74 (NPYRDDDVELERGD) the composition is skewed to basic and acidic residues. The chain crosses the membrane as a helical; Signal-anchor for type II membrane protein span at residues 92–112 (LIWVVGLLCLGGWILAFVLFW). The Vacuolar segment spans residues 113-899 (GRRNSELSSS…QQGNSVLPVT (787 aa)). Residues N149, N194, N347, N409, N513, N638, and N643 are each glycosylated (N-linked (GlcNAc...) asparagine). S752 serves as the catalytic Charge relay system. N811 carries N-linked (GlcNAc...) asparagine glycosylation. Residues D829 and H862 each act as charge relay system in the active site.

This sequence belongs to the peptidase S9B family.

The protein localises to the vacuole membrane. It catalyses the reaction Release of an N-terminal dipeptide, Xaa-Yaa-|-Zaa-, from a polypeptide, preferentially when Yaa is Pro, provided Zaa is neither Pro nor hydroxyproline.. Type IV dipeptidyl-peptidase which removes N-terminal dipeptides sequentially from polypeptides having unsubstituted N-termini provided that the penultimate residue is proline. The chain is Probable dipeptidyl-aminopeptidase B (dapB) from Talaromyces marneffei (strain ATCC 18224 / CBS 334.59 / QM 7333) (Penicillium marneffei).